The primary structure comprises 252 residues: 2-succinyl-6-hydroxy-2,4-cyclohexadiene-1-carboxylate synthase (252 aa).

It belongs to the AB hydrolase superfamily. MenH family. As to quaternary structure, monomer.

The catalysed reaction is 5-enolpyruvoyl-6-hydroxy-2-succinyl-cyclohex-3-ene-1-carboxylate = (1R,6R)-6-hydroxy-2-succinyl-cyclohexa-2,4-diene-1-carboxylate + pyruvate. It functions in the pathway quinol/quinone metabolism; 1,4-dihydroxy-2-naphthoate biosynthesis; 1,4-dihydroxy-2-naphthoate from chorismate: step 3/7. It participates in quinol/quinone metabolism; menaquinone biosynthesis. Catalyzes a proton abstraction reaction that results in 2,5-elimination of pyruvate from 2-succinyl-5-enolpyruvyl-6-hydroxy-3-cyclohexene-1-carboxylate (SEPHCHC) and the formation of 2-succinyl-6-hydroxy-2,4-cyclohexadiene-1-carboxylate (SHCHC). The chain is 2-succinyl-6-hydroxy-2,4-cyclohexadiene-1-carboxylate synthase from Salmonella heidelberg (strain SL476).